The chain runs to 304 residues: Acetyl-coenzyme A carboxylase carboxyl transferase subunit beta (304 aa).

The region spanning V23–V292 is the CoA carboxyltransferase N-terminal domain. Zn(2+) is bound by residues C27, C30, C46, and C49. The segment at C27–C49 adopts a C4-type zinc-finger fold. Positions N284–A304 are disordered. Residues P295–A304 are compositionally biased toward pro residues.

It belongs to the AccD/PCCB family. Acetyl-CoA carboxylase is a heterohexamer composed of biotin carboxyl carrier protein (AccB), biotin carboxylase (AccC) and two subunits each of ACCase subunit alpha (AccA) and ACCase subunit beta (AccD). Zn(2+) is required as a cofactor.

It is found in the cytoplasm. The enzyme catalyses N(6)-carboxybiotinyl-L-lysyl-[protein] + acetyl-CoA = N(6)-biotinyl-L-lysyl-[protein] + malonyl-CoA. It participates in lipid metabolism; malonyl-CoA biosynthesis; malonyl-CoA from acetyl-CoA: step 1/1. Functionally, component of the acetyl coenzyme A carboxylase (ACC) complex. Biotin carboxylase (BC) catalyzes the carboxylation of biotin on its carrier protein (BCCP) and then the CO(2) group is transferred by the transcarboxylase to acetyl-CoA to form malonyl-CoA. The chain is Acetyl-coenzyme A carboxylase carboxyl transferase subunit beta from Shigella boydii serotype 18 (strain CDC 3083-94 / BS512).